We begin with the raw amino-acid sequence, 537 residues long: Cytochrome P450 CYP12A2 (537 aa).

Residue cysteine 483 coordinates heme.

It belongs to the cytochrome P450 family. Heme serves as cofactor.

This Musca domestica (House fly) protein is Cytochrome P450 CYP12A2 (CYP12A2).